Here is a 330-residue protein sequence, read N- to C-terminus: Formylaminopyrimidine-binding protein (330 aa).

An N-terminal signal peptide occupies residues 1–18 (MKSFKIISLLLAILFLAS). C19 is lipidated: N-palmitoyl cysteine. C19 is lipidated: S-diacylglycerol cysteine. Residues 38–39 (DW), Y90, N145, Y188, and E192 contribute to the substrate site.

The protein belongs to the NMT1 family. As to quaternary structure, the complex is likely composed of an ATP-binding protein (ThiZ), a transmembrane protein (ThiX) and a solute-binding protein (ThiY).

The protein localises to the cell membrane. It functions in the pathway cofactor biosynthesis; thiamine diphosphate biosynthesis. Functionally, participates in a thiamine pyrimidine salvage pathway as part of the ABC transporter complex ThiXYZ involved in the import of thiamine degradation products. Binds the formylaminopyrimidine N-formyl-4-amino-5-aminomethyl-2-methylpyrimidine (FAMP). Does not bind thiamine. This is Formylaminopyrimidine-binding protein from Halalkalibacterium halodurans (strain ATCC BAA-125 / DSM 18197 / FERM 7344 / JCM 9153 / C-125) (Bacillus halodurans).